Consider the following 458-residue polypeptide: LysM domain-containing protein ARB_05157 (458 aa).

Residues 1-19 form the signal peptide; sequence MVSLKVCFLLLASSELAFG. A LysM 1 domain is found at 157–203; that stretch reads AFHLVKQGEDCGTISATYGITSAQFLAWNPSAGKDCTGLWANAYACV. Positions 210-232 are disordered; sequence PPKTTSQAPQPTPTKPSNGIETP. Residues 212–229 show a composition bias toward polar residues; the sequence is KTTSQAPQPTPTKPSNGI. 3 consecutive LysM domains span residues 245–291, 325–371, and 409–455; these read KFHL…YACV, KFYL…YSCV, and KFHF…YLCV.

It localises to the secreted. Might have a role in sequestration of chitin oligosaccharides (breakdown products of fungal cell walls that are released during invasion and act as triggers of host immunity) to dampen host defense. This Arthroderma benhamiae (strain ATCC MYA-4681 / CBS 112371) (Trichophyton mentagrophytes) protein is LysM domain-containing protein ARB_05157.